The following is a 188-amino-acid chain: Protein GrpE 2 (188 aa).

Basic and acidic residues predominate over residues 1–29; sequence MDNQEKKTNYQNTDKENDLEKNKEKKNDE. Residues 1-33 form a disordered region; sequence MDNQEKKTNYQNTDKENDLEKNKEKKNDESIFQ.

This sequence belongs to the GrpE family. Homodimer.

It localises to the cytoplasm. Functionally, participates actively in the response to hyperosmotic and heat shock by preventing the aggregation of stress-denatured proteins, in association with DnaK and GrpE. It is the nucleotide exchange factor for DnaK and may function as a thermosensor. Unfolded proteins bind initially to DnaJ; upon interaction with the DnaJ-bound protein, DnaK hydrolyzes its bound ATP, resulting in the formation of a stable complex. GrpE releases ADP from DnaK; ATP binding to DnaK triggers the release of the substrate protein, thus completing the reaction cycle. Several rounds of ATP-dependent interactions between DnaJ, DnaK and GrpE are required for fully efficient folding. The polypeptide is Protein GrpE 2 (Buchnera aphidicola subsp. Schizaphis graminum (strain Sg)).